The chain runs to 603 residues: Geraniol synthase Tps-5073G30, chloroplastic (603 aa).

A chloroplast-targeting transit peptide spans 1 to 35; sequence MCSISQKVVIGLNKAAANNNLQNLDRRGFKTRCVS. Positions 319, 356, 360, 497, and 500 each coordinate (2E)-geranyl diphosphate. Mg(2+) contacts are provided by Asp-356 and Asp-360. Positions 356-360 match the DDXXD motif motif; that stretch reads DDVYD. Residues Asp-500, Thr-504, and Glu-508 each coordinate Mg(2+).

The protein belongs to the terpene synthase family. Tpsb subfamily. As to quaternary structure, monomer. It depends on Mg(2+) as a cofactor. Requires Mn(2+) as cofactor.

It is found in the plastid. Its subcellular location is the chloroplast. The enzyme catalyses (2E)-geranyl diphosphate + H2O = (2E)-geraniol + diphosphate. The protein operates within secondary metabolite biosynthesis; terpenoid biosynthesis. Monoterpene synthase (mono-TPS) involved in the biosynthesis of monoterpenes natural products. Catalyzes the conversion of (2E)-geranyl diphosphate (GPP) into geraniol. This is Geraniol synthase Tps-5073G30, chloroplastic from Perilla frutescens (Beefsteak mint).